Consider the following 121-residue polypeptide: Large ribosomal subunit protein uL24 (121 aa).

The interval 1 to 23 (MVRIESSQPRKQRKARYDAPSHM) is disordered.

The protein belongs to the universal ribosomal protein uL24 family. Part of the 50S ribosomal subunit.

Its function is as follows. One of two assembly initiator proteins, it binds directly to the 5'-end of the 23S rRNA, where it nucleates assembly of the 50S subunit. Functionally, located at the polypeptide exit tunnel on the outside of the subunit. In Methanoregula boonei (strain DSM 21154 / JCM 14090 / 6A8), this protein is Large ribosomal subunit protein uL24.